Here is a 1177-residue protein sequence, read N- to C-terminus: DNA-directed RNA polymerase subunit beta (1177 aa).

The disordered stretch occupies residues arginine 1154 to glutamate 1177. Residues histidine 1162 to glutamate 1177 are compositionally biased toward basic and acidic residues.

Belongs to the RNA polymerase beta chain family. As to quaternary structure, the RNAP catalytic core consists of 2 alpha, 1 beta, 1 beta' and 1 omega subunit. When a sigma factor is associated with the core the holoenzyme is formed, which can initiate transcription.

The catalysed reaction is RNA(n) + a ribonucleoside 5'-triphosphate = RNA(n+1) + diphosphate. In terms of biological role, DNA-dependent RNA polymerase catalyzes the transcription of DNA into RNA using the four ribonucleoside triphosphates as substrates. The chain is DNA-directed RNA polymerase subunit beta from Bacillus mycoides (strain KBAB4) (Bacillus weihenstephanensis).